We begin with the raw amino-acid sequence, 1051 residues long: Carbamoyl phosphate synthase large chain (1051 aa).

Residues 1-399 (MKETPKKVLV…SLQKAVRMLD (399 aa)) are carboxyphosphate synthetic domain. ATP is bound by residues Arg-127, Arg-167, Gly-173, Gly-174, Lys-206, Leu-208, Glu-213, Gly-239, Val-240, His-241, Gln-282, and Glu-296. Positions 131 to 325 (RETMIENNLP…LAYVSAKLAL (195 aa)) constitute an ATP-grasp 1 domain. Mg(2+)-binding residues include Gln-282, Glu-296, and Asn-298. Residues Gln-282, Glu-296, and Asn-298 each coordinate Mn(2+). Positions 400–548 (IGEPGVVGGK…LTYNGTEDDL (149 aa)) are oligomerization domain. A carbamoyl phosphate synthetic domain region spans residues 549–930 (EFSQGNKLLI…LKSWLSSIPN (382 aa)). The region spanning 673–863 (SKLLDKLGIS…LINEAMKAIF (191 aa)) is the ATP-grasp 2 domain. ATP contacts are provided by Arg-709, Lys-748, Ile-750, Glu-755, Gly-779, Val-780, His-781, Ser-782, Gln-822, and Glu-834. The Mg(2+) site is built by Gln-822, Glu-834, and Asn-836. The Mn(2+) site is built by Gln-822, Glu-834, and Asn-836. Positions 930 to 1051 (NRIPNKNGIA…FEISEYGGGI (122 aa)) constitute an MGS-like domain. An allosteric domain region spans residues 931 to 1051 (RIPNKNGIAL…FEISEYGGGI (121 aa)).

This sequence belongs to the CarB family. As to quaternary structure, composed of two chains; the small (or glutamine) chain promotes the hydrolysis of glutamine to ammonia, which is used by the large (or ammonia) chain to synthesize carbamoyl phosphate. Tetramer of heterodimers (alpha,beta)4. Mg(2+) is required as a cofactor. Mn(2+) serves as cofactor.

The enzyme catalyses hydrogencarbonate + L-glutamine + 2 ATP + H2O = carbamoyl phosphate + L-glutamate + 2 ADP + phosphate + 2 H(+). It catalyses the reaction hydrogencarbonate + NH4(+) + 2 ATP = carbamoyl phosphate + 2 ADP + phosphate + 2 H(+). It functions in the pathway amino-acid biosynthesis; L-arginine biosynthesis; carbamoyl phosphate from bicarbonate: step 1/1. Its pathway is pyrimidine metabolism; UMP biosynthesis via de novo pathway; (S)-dihydroorotate from bicarbonate: step 1/3. Functionally, large subunit of the glutamine-dependent carbamoyl phosphate synthetase (CPSase). CPSase catalyzes the formation of carbamoyl phosphate from the ammonia moiety of glutamine, carbonate, and phosphate donated by ATP, constituting the first step of 2 biosynthetic pathways, one leading to arginine and/or urea and the other to pyrimidine nucleotides. The large subunit (synthetase) binds the substrates ammonia (free or transferred from glutamine from the small subunit), hydrogencarbonate and ATP and carries out an ATP-coupled ligase reaction, activating hydrogencarbonate by forming carboxy phosphate which reacts with ammonia to form carbamoyl phosphate. This Saccharolobus islandicus (strain L.S.2.15 / Lassen #1) (Sulfolobus islandicus) protein is Carbamoyl phosphate synthase large chain.